An 86-amino-acid polypeptide reads, in one-letter code: Protein Tat (86 aa).

The tract at residues 1–24 (MDPVDPNQEPWNHPGSQPRTACNN) is interaction with human CREBBP. The segment at 1-48 (MDPVDPNQEPWNHPGSQPRTACNNCYCKKCCYHCQLCFLKKGLGIYYG) is transactivation. Positions 22, 25, and 27 each coordinate Zn(2+). The cysteine-rich stretch occupies residues 22–37 (CNNCYCKKCCYHCQLC). K28 is modified (N6-acetyllysine; by host PCAF). 4 residues coordinate Zn(2+): C30, H33, C34, and C37. The tract at residues 38 to 48 (FLKKGLGIYYG) is core. Over residues 48-58 (GRKKRRQRRGT) the composition is skewed to basic residues. Residues 48–86 (GRKKRRQRRGTPKSLQDHQTLIPKQPLSRTSGDPTGPEK) form a disordered region. The Nuclear localization signal, RNA-binding (TAR), and protein transduction motif lies at 49-57 (RKKRRQRRG). The interaction with the host capping enzyme RNGTT stretch occupies residues 49-86 (RKKRRQRRGTPKSLQDHQTLIPKQPLSRTSGDPTGPEK). An N6-acetyllysine; by host EP300 and GCN5L2 mark is found at K50 and K51. Asymmetric dimethylarginine; by host PRMT6 occurs at positions 52 and 53. K71 is covalently cross-linked (Glycyl lysine isopeptide (Lys-Gly) (interchain with G-Cter in ubiquitin)).

The protein belongs to the lentiviruses Tat family. As to quaternary structure, interacts with host CCNT1. Associates with the P-TEFb complex composed at least of Tat, P-TEFb (CDK9 and CCNT1), TAR RNA, RNA Pol II. Recruits the HATs CREBBP, TAF1/TFIID, EP300, PCAF and GCN5L2. Interacts with host KAT5/Tip60; this interaction targets the latter to degradation. Interacts with the host deacetylase SIRT1. Interacts with host capping enzyme RNGTT; this interaction stimulates RNGTT. Binds to host KDR, and to the host integrins ITGAV/ITGB3 and ITGA5/ITGB1. Interacts with host KPNB1/importin beta-1 without previous binding to KPNA1/importin alpha-1. Interacts with EIF2AK2. Interacts with host nucleosome assembly protein NAP1L1; this interaction may be required for the transport of Tat within the nucleus, since the two proteins interact at the nuclear rim. Interacts with host C1QBP/SF2P32; this interaction involves lysine-acetylated Tat. Interacts with the host chemokine receptors CCR2, CCR3 and CXCR4. Interacts with host DPP4/CD26; this interaction may trigger an anti-proliferative effect. Interacts with host LDLR. Interacts with the host extracellular matrix metalloproteinase MMP1. Interacts with host PRMT6; this interaction mediates Tat's methylation. Interacts with, and is ubiquitinated by MDM2/Hdm2. Interacts with host PSMC3 and HTATIP2. Interacts with STAB1; this interaction may overcome SATB1-mediated repression of IL2 and IL2RA (interleukin) in T cells by binding to the same domain than HDAC1. Interacts (when acetylated) with human CDK13, thereby increasing HIV-1 mRNA splicing and promoting the production of the doubly spliced HIV-1 protein Nef. Interacts with host TBP; this interaction modulates the activity of transcriptional pre-initiation complex. Interacts with host RELA. Interacts with host PLSCR1; this interaction negatively regulates Tat transactivation activity by altering its subcellular distribution. Post-translationally, asymmetrical arginine methylation by host PRMT6 seems to diminish the transactivation capacity of Tat and affects the interaction with host CCNT1. Acetylation by EP300, CREBBP, GCN5L2/GCN5 and PCAF regulates the transactivation activity of Tat. EP300-mediated acetylation of Lys-50 promotes dissociation of Tat from the TAR RNA through the competitive binding to PCAF's bromodomain. In addition, the non-acetylated Tat's N-terminus can also interact with PCAF. PCAF-mediated acetylation of Lys-28 enhances Tat's binding to CCNT1. Lys-50 is deacetylated by SIRT1. In terms of processing, polyubiquitination by host MDM2 does not target Tat to degradation, but activates its transactivation function and fosters interaction with CCNT1 and TAR RNA. Post-translationally, phosphorylated by EIF2AK2 on serine and threonine residues adjacent to the basic region important for TAR RNA binding and function. Phosphorylation of Tat by EIF2AK2 is dependent on the prior activation of EIF2AK2 by dsRNA.

The protein resides in the host nucleus. Its subcellular location is the host nucleolus. It localises to the host cytoplasm. The protein localises to the secreted. Transcriptional activator that increases RNA Pol II processivity, thereby increasing the level of full-length viral transcripts. Recognizes a hairpin structure at the 5'-LTR of the nascent viral mRNAs referred to as the transactivation responsive RNA element (TAR) and recruits the cyclin T1-CDK9 complex (P-TEFb complex) that will in turn hyperphosphorylate the RNA polymerase II to allow efficient elongation. The CDK9 component of P-TEFb and other Tat-activated kinases hyperphosphorylate the C-terminus of RNA Pol II that becomes stabilized and much more processive. Other factors such as HTATSF1/Tat-SF1, SUPT5H/SPT5, and HTATIP2 are also important for Tat's function. Besides its effect on RNA Pol II processivity, Tat induces chromatin remodeling of proviral genes by recruiting the histone acetyltransferases (HATs) CREBBP, EP300 and PCAF to the chromatin. This also contributes to the increase in proviral transcription rate, especially when the provirus integrates in transcriptionally silent region of the host genome. To ensure maximal activation of the LTR, Tat mediates nuclear translocation of NF-kappa-B by interacting with host RELA. Through its interaction with host TBP, Tat may also modulate transcription initiation. Tat can reactivate a latently infected cell by penetrating in it and transactivating its LTR promoter. In the cytoplasm, Tat is thought to act as a translational activator of HIV-1 mRNAs. Its function is as follows. Extracellular circulating Tat can be endocytosed by surrounding uninfected cells via the binding to several surface receptors such as CD26, CXCR4, heparan sulfate proteoglycans (HSPG) or LDLR. Neurons are rarely infected, but they internalize Tat via their LDLR. Through its interaction with nuclear HATs, Tat is potentially able to control the acetylation-dependent cellular gene expression. Modulates the expression of many cellular genes involved in cell survival, proliferation or in coding for cytokines or cytokine receptors. Tat plays a role in T-cell and neurons apoptosis. Tat induced neurotoxicity and apoptosis probably contribute to neuroAIDS. Circulating Tat also acts as a chemokine-like and/or growth factor-like molecule that binds to specific receptors on the surface of the cells, affecting many cellular pathways. In the vascular system, Tat binds to ITGAV/ITGB3 and ITGA5/ITGB1 integrins dimers at the surface of endothelial cells and competes with bFGF for heparin-binding sites, leading to an excess of soluble bFGF. The protein is Protein Tat of Human immunodeficiency virus type 1 group M subtype H (isolate VI991) (HIV-1).